The chain runs to 413 residues: Aspartate aminotransferase, cytoplasmic (413 aa).

L-aspartate contacts are provided by glycine 39 and tryptophan 141. Serine 149 carries the post-translational modification Phosphoserine. Residue asparagine 195 coordinates L-aspartate. Lysine 259 carries the post-translational modification N6-(pyridoxal phosphate)lysine. Arginine 387 lines the L-aspartate pocket.

It belongs to the class-I pyridoxal-phosphate-dependent aminotransferase family. As to quaternary structure, homodimer. Pyridoxal 5'-phosphate is required as a cofactor.

Its subcellular location is the cytoplasm. It carries out the reaction L-aspartate + 2-oxoglutarate = oxaloacetate + L-glutamate. It catalyses the reaction L-cysteine + 2-oxoglutarate = 2-oxo-3-sulfanylpropanoate + L-glutamate. The enzyme catalyses (2S)-2-aminobutanoate + 2-oxoglutarate = 2-oxobutanoate + L-glutamate. The catalysed reaction is 3-sulfino-L-alanine + 2-oxoglutarate = 3-sulfinopyruvate + L-glutamate. Functionally, biosynthesis of L-glutamate from L-aspartate or L-cysteine. Important regulator of levels of glutamate, the major excitatory neurotransmitter of the vertebrate central nervous system. Acts as a scavenger of glutamate in brain neuroprotection. The aspartate aminotransferase activity is involved in hepatic glucose synthesis during development and in adipocyte glyceroneogenesis. Using L-cysteine as substrate, regulates levels of mercaptopyruvate, an important source of hydrogen sulfide. Mercaptopyruvate is converted into H(2)S via the action of 3-mercaptopyruvate sulfurtransferase (3MST). Hydrogen sulfide is an important synaptic modulator and neuroprotectant in the brain. The polypeptide is Aspartate aminotransferase, cytoplasmic (Macaca fascicularis (Crab-eating macaque)).